The following is a 407-amino-acid chain: Peptidase T (407 aa).

A Zn(2+)-binding site is contributed by His-82. The active site involves Asp-84. Zn(2+) is bound at residue Asp-143. Glu-177 serves as the catalytic Proton acceptor. Residues Glu-178, Asp-200, and His-382 each coordinate Zn(2+).

Belongs to the peptidase M20B family. It depends on Zn(2+) as a cofactor.

Its subcellular location is the cytoplasm. It carries out the reaction Release of the N-terminal residue from a tripeptide.. Functionally, cleaves the N-terminal amino acid of tripeptides. This chain is Peptidase T, found in Streptococcus pyogenes serotype M1.